Consider the following 292-residue polypeptide: Protease HtpX homolog (292 aa).

The next 2 membrane-spanning stretches (helical) occupy residues 4 to 24 (ILLF…VASL) and 39 to 59 (GALL…SLLI). Residue H144 coordinates Zn(2+). Residue E145 is part of the active site. H148 lines the Zn(2+) pocket. 2 helical membrane passes run 159-179 (LIQG…GYAV) and 199-219 (VTTI…VAWF). E224 contacts Zn(2+).

It belongs to the peptidase M48B family. Zn(2+) is required as a cofactor.

Its subcellular location is the cell inner membrane. This is Protease HtpX homolog from Verminephrobacter eiseniae (strain EF01-2).